We begin with the raw amino-acid sequence, 842 residues long: G-type lectin S-receptor-like serine/threonine-protein kinase At1g11330 (842 aa).

An N-terminal signal peptide occupies residues methionine 1–glycine 29. The Extracellular segment spans residues glutamate 30–asparagine 444. One can recognise a Bulb-type lectin domain in the interval arginine 32–serine 157. 6 N-linked (GlcNAc...) asparagine glycosylation sites follow: asparagine 63, asparagine 94, asparagine 122, asparagine 130, asparagine 196, and asparagine 260. The EGF-like; atypical domain maps to proline 294–threonine 330. 2 disulfides stabilise this stretch: cysteine 298/cysteine 310 and cysteine 304/cysteine 318. N-linked (GlcNAc...) asparagine glycans are attached at residues asparagine 328, asparagine 336, asparagine 354, and asparagine 396. One can recognise a PAN domain in the interval cysteine 349–alanine 435. Cystine bridges form between cysteine 389–cysteine 410 and cysteine 393–cysteine 399. The helical transmembrane segment at leucine 445–leucine 465 threads the bilayer. The Cytoplasmic portion of the chain corresponds to leucine 466 to arginine 842. In terms of domain architecture, Protein kinase spans phenylalanine 524 to phenylalanine 810. Residues leucine 530–valine 538 and lysine 552 each bind ATP. 2 positions are modified to phosphoserine: serine 558 and serine 573. The interval methionine 613–isoleucine 630 is caM-binding. The active-site Proton acceptor is aspartate 649. Phosphoserine is present on residues serine 653 and serine 666. A Phosphothreonine modification is found at threonine 683. Residues serine 726, serine 727, serine 821, and serine 830 each carry the phosphoserine modification. Residues arginine 814–arginine 842 are disordered. Low complexity predominate over residues glutamate 818–glutamine 827. Positions lysine 828 to arginine 842 are enriched in polar residues. Threonine 837 is subject to Phosphothreonine.

Belongs to the protein kinase superfamily. Ser/Thr protein kinase family.

It is found in the cell membrane. It catalyses the reaction L-seryl-[protein] + ATP = O-phospho-L-seryl-[protein] + ADP + H(+). The enzyme catalyses L-threonyl-[protein] + ATP = O-phospho-L-threonyl-[protein] + ADP + H(+). The protein is G-type lectin S-receptor-like serine/threonine-protein kinase At1g11330 of Arabidopsis thaliana (Mouse-ear cress).